Here is a 372-residue protein sequence, read N- to C-terminus: Queuine tRNA-ribosyltransferase (372 aa).

The active-site Proton acceptor is Asp-92. Residues 92-96 (DSGGY), Asp-146, Gln-188, and Gly-215 contribute to the substrate site. The tract at residues 246–252 (GIGSLRE) is RNA binding. Residue Asp-265 is the Nucleophile of the active site. Residues 270-274 (TRLGR) form an RNA binding; important for wobble base 34 recognition region. The Zn(2+) site is built by Cys-303, Cys-305, Cys-308, and His-334.

It belongs to the queuine tRNA-ribosyltransferase family. Homodimer. Within each dimer, one monomer is responsible for RNA recognition and catalysis, while the other monomer binds to the replacement base PreQ1. It depends on Zn(2+) as a cofactor.

It catalyses the reaction 7-aminomethyl-7-carbaguanine + guanosine(34) in tRNA = 7-aminomethyl-7-carbaguanosine(34) in tRNA + guanine. It functions in the pathway tRNA modification; tRNA-queuosine biosynthesis. Catalyzes the base-exchange of a guanine (G) residue with the queuine precursor 7-aminomethyl-7-deazaguanine (PreQ1) at position 34 (anticodon wobble position) in tRNAs with GU(N) anticodons (tRNA-Asp, -Asn, -His and -Tyr). Catalysis occurs through a double-displacement mechanism. The nucleophile active site attacks the C1' of nucleotide 34 to detach the guanine base from the RNA, forming a covalent enzyme-RNA intermediate. The proton acceptor active site deprotonates the incoming PreQ1, allowing a nucleophilic attack on the C1' of the ribose to form the product. After dissociation, two additional enzymatic reactions on the tRNA convert PreQ1 to queuine (Q), resulting in the hypermodified nucleoside queuosine (7-(((4,5-cis-dihydroxy-2-cyclopenten-1-yl)amino)methyl)-7-deazaguanosine). The polypeptide is Queuine tRNA-ribosyltransferase (Prochlorococcus marinus subsp. pastoris (strain CCMP1986 / NIES-2087 / MED4)).